Here is a 95-residue protein sequence, read N- to C-terminus: Integration host factor subunit beta (95 aa).

Residues 56–76 form a disordered region; that stretch reads RAPRTGRNPKTGTSVELDGKY.

Belongs to the bacterial histone-like protein family. In terms of assembly, heterodimer of an alpha and a beta chain.

In terms of biological role, this protein is one of the two subunits of integration host factor, a specific DNA-binding protein that functions in genetic recombination as well as in transcriptional and translational control. This is Integration host factor subunit beta from Shewanella woodyi (strain ATCC 51908 / MS32).